A 275-amino-acid polypeptide reads, in one-letter code: Tryptophan synthase alpha chain (275 aa).

Catalysis depends on proton acceptor residues glutamate 49 and aspartate 60.

It belongs to the TrpA family. Tetramer of two alpha and two beta chains.

The catalysed reaction is (1S,2R)-1-C-(indol-3-yl)glycerol 3-phosphate + L-serine = D-glyceraldehyde 3-phosphate + L-tryptophan + H2O. It participates in amino-acid biosynthesis; L-tryptophan biosynthesis; L-tryptophan from chorismate: step 5/5. Functionally, the alpha subunit is responsible for the aldol cleavage of indoleglycerol phosphate to indole and glyceraldehyde 3-phosphate. This Nitrosomonas europaea (strain ATCC 19718 / CIP 103999 / KCTC 2705 / NBRC 14298) protein is Tryptophan synthase alpha chain.